Here is a 435-residue protein sequence, read N- to C-terminus: Xylose isomerase (435 aa).

Active-site residues include His-99 and Asp-102. 7 residues coordinate Mg(2+): Glu-230, Glu-266, His-269, Asp-294, Asp-305, Asp-307, and Asp-337.

The protein belongs to the xylose isomerase family. Homotetramer. It depends on Mg(2+) as a cofactor.

It is found in the cytoplasm. The catalysed reaction is alpha-D-xylose = alpha-D-xylulofuranose. The sequence is that of Xylose isomerase from Listeria welshimeri serovar 6b (strain ATCC 35897 / DSM 20650 / CCUG 15529 / CIP 8149 / NCTC 11857 / SLCC 5334 / V8).